The primary structure comprises 304 residues: UDP-3-O-acyl-N-acetylglucosamine deacetylase (304 aa).

The Zn(2+) site is built by H79, H238, and D242. H265 acts as the Proton donor in catalysis.

Belongs to the LpxC family. Zn(2+) serves as cofactor.

The catalysed reaction is a UDP-3-O-[(3R)-3-hydroxyacyl]-N-acetyl-alpha-D-glucosamine + H2O = a UDP-3-O-[(3R)-3-hydroxyacyl]-alpha-D-glucosamine + acetate. It participates in glycolipid biosynthesis; lipid IV(A) biosynthesis; lipid IV(A) from (3R)-3-hydroxytetradecanoyl-[acyl-carrier-protein] and UDP-N-acetyl-alpha-D-glucosamine: step 2/6. Catalyzes the hydrolysis of UDP-3-O-myristoyl-N-acetylglucosamine to form UDP-3-O-myristoylglucosamine and acetate, the committed step in lipid A biosynthesis. This is UDP-3-O-acyl-N-acetylglucosamine deacetylase from Photobacterium profundum (strain SS9).